Here is a 365-residue protein sequence, read N- to C-terminus: 3-dehydroquinate synthase (365 aa).

Residues 107–111, 131–132, K144, and K153 contribute to the NAD(+) site; these read GVIGD and TS. Zn(2+) is bound by residues E186, H251, and H268.

It belongs to the sugar phosphate cyclases superfamily. Dehydroquinate synthase family. Requires Co(2+) as cofactor. The cofactor is Zn(2+). It depends on NAD(+) as a cofactor.

It is found in the cytoplasm. It catalyses the reaction 7-phospho-2-dehydro-3-deoxy-D-arabino-heptonate = 3-dehydroquinate + phosphate. The protein operates within metabolic intermediate biosynthesis; chorismate biosynthesis; chorismate from D-erythrose 4-phosphate and phosphoenolpyruvate: step 2/7. Catalyzes the conversion of 3-deoxy-D-arabino-heptulosonate 7-phosphate (DAHP) to dehydroquinate (DHQ). In Crocosphaera subtropica (strain ATCC 51142 / BH68) (Cyanothece sp. (strain ATCC 51142)), this protein is 3-dehydroquinate synthase.